Consider the following 399-residue polypeptide: Tyrosine--tRNA ligase (399 aa).

Residue tyrosine 36 participates in L-tyrosine binding. The 'HIGH' region signature appears at 41–50 (PTAPSLHIGN). Tyrosine 166 and glutamine 170 together coordinate L-tyrosine. The 'KMSKS' region motif lies at 226-230 (KMGKS). Lysine 229 is an ATP binding site. In terms of domain architecture, S4 RNA-binding spans 332–395 (TRLVDVIVDL…KKRFVTVQVI (64 aa)).

This sequence belongs to the class-I aminoacyl-tRNA synthetase family. TyrS type 1 subfamily. In terms of assembly, homodimer.

The protein localises to the cytoplasm. The enzyme catalyses tRNA(Tyr) + L-tyrosine + ATP = L-tyrosyl-tRNA(Tyr) + AMP + diphosphate + H(+). Catalyzes the attachment of tyrosine to tRNA(Tyr) in a two-step reaction: tyrosine is first activated by ATP to form Tyr-AMP and then transferred to the acceptor end of tRNA(Tyr). The sequence is that of Tyrosine--tRNA ligase from Mycoplasma pneumoniae (strain ATCC 29342 / M129 / Subtype 1) (Mycoplasmoides pneumoniae).